The primary structure comprises 294 residues: Glycine--tRNA ligase alpha subunit (294 aa).

This sequence belongs to the class-II aminoacyl-tRNA synthetase family. Tetramer of two alpha and two beta subunits.

The protein localises to the cytoplasm. It catalyses the reaction tRNA(Gly) + glycine + ATP = glycyl-tRNA(Gly) + AMP + diphosphate. The polypeptide is Glycine--tRNA ligase alpha subunit (Nostoc sp. (strain PCC 7120 / SAG 25.82 / UTEX 2576)).